A 346-amino-acid polypeptide reads, in one-letter code: Biotin synthase (346 aa).

The Radical SAM core domain occupies 38 to 256; the sequence is RQVQVSTLLS…IAVARIMMPT (219 aa). [4Fe-4S] cluster contacts are provided by Cys-53, Cys-57, and Cys-60. [2Fe-2S] cluster-binding residues include Cys-97, Cys-128, Cys-188, and Arg-260.

This sequence belongs to the radical SAM superfamily. Biotin synthase family. In terms of assembly, homodimer. The cofactor is [4Fe-4S] cluster. [2Fe-2S] cluster serves as cofactor.

It catalyses the reaction (4R,5S)-dethiobiotin + (sulfur carrier)-SH + 2 reduced [2Fe-2S]-[ferredoxin] + 2 S-adenosyl-L-methionine = (sulfur carrier)-H + biotin + 2 5'-deoxyadenosine + 2 L-methionine + 2 oxidized [2Fe-2S]-[ferredoxin]. It participates in cofactor biosynthesis; biotin biosynthesis; biotin from 7,8-diaminononanoate: step 2/2. In terms of biological role, catalyzes the conversion of dethiobiotin (DTB) to biotin by the insertion of a sulfur atom into dethiobiotin via a radical-based mechanism. The polypeptide is Biotin synthase (Escherichia coli (strain SE11)).